The primary structure comprises 59 residues: Protein ORF5a (59 aa).

The chain crosses the membrane as a helical; Signal-anchor for type III membrane protein span at residues 13 to 33 (VIYDCIAILALGCAITCLLLI).

The protein localises to the membrane. This chain is Protein ORF5a (GP5), found in Equine arteritis virus (strain Bucyrus) (EAV).